The sequence spans 225 residues: Heptaprenylglyceryl phosphate synthase (225 aa).

Sn-glycerol 1-phosphate is bound at residue Lys-6. Residues Asp-8 and Thr-34 each contribute to the Mg(2+) site. Sn-glycerol 1-phosphate is bound by residues 153–158 (YVEYSG), Gly-183, and 203–204 (GN).

This sequence belongs to the GGGP/HepGP synthase family. Group I subfamily. As to quaternary structure, homodimer. Mg(2+) is required as a cofactor.

It catalyses the reaction sn-glycerol 1-phosphate + all-trans-heptaprenyl diphosphate = 3-heptaprenyl-sn-glycero-1-phosphate + diphosphate. It participates in membrane lipid metabolism; glycerophospholipid metabolism. Functionally, prenyltransferase that catalyzes in vivo the transfer of the heptaprenyl moiety of heptaprenyl pyrophosphate (HepPP; 35 carbon atoms) to the C3 hydroxyl of sn-glycerol-1-phosphate (G1P), producing heptaprenylglyceryl phosphate (HepGP). This reaction is an ether-bond-formation step in the biosynthesis of archaea-type G1P-based membrane lipids found in Bacillales. To a much lesser extent, is also able to use geranylgeranyl diphosphate (GGPP; C20) as the prenyl donor. The sequence is that of Heptaprenylglyceryl phosphate synthase from Listeria monocytogenes serovar 1/2a (strain ATCC BAA-679 / EGD-e).